The following is a 194-amino-acid chain: ATP-dependent Clp protease proteolytic subunit (194 aa).

Residue Ser98 is the Nucleophile of the active site. His123 is a catalytic residue.

The protein belongs to the peptidase S14 family. As to quaternary structure, fourteen ClpP subunits assemble into 2 heptameric rings which stack back to back to give a disk-like structure with a central cavity, resembling the structure of eukaryotic proteasomes.

It localises to the cytoplasm. The catalysed reaction is Hydrolysis of proteins to small peptides in the presence of ATP and magnesium. alpha-casein is the usual test substrate. In the absence of ATP, only oligopeptides shorter than five residues are hydrolyzed (such as succinyl-Leu-Tyr-|-NHMec, and Leu-Tyr-Leu-|-Tyr-Trp, in which cleavage of the -Tyr-|-Leu- and -Tyr-|-Trp bonds also occurs).. Functionally, cleaves peptides in various proteins in a process that requires ATP hydrolysis. Has a chymotrypsin-like activity. Plays a major role in the degradation of misfolded proteins. In Staphylococcus saprophyticus subsp. saprophyticus (strain ATCC 15305 / DSM 20229 / NCIMB 8711 / NCTC 7292 / S-41), this protein is ATP-dependent Clp protease proteolytic subunit.